Consider the following 213-residue polypeptide: Orotate phosphoribosyltransferase (213 aa).

Lys-26 serves as a coordination point for 5-phospho-alpha-D-ribose 1-diphosphate. 34-35 (FF) is an orotate binding site. 5-phospho-alpha-D-ribose 1-diphosphate contacts are provided by residues 72-73 (YK), Arg-99, Lys-100, Lys-103, His-105, and 124-132 (DDVITAGTA). Residues Thr-128 and Arg-156 each contribute to the orotate site.

Belongs to the purine/pyrimidine phosphoribosyltransferase family. PyrE subfamily. In terms of assembly, homodimer. Mg(2+) serves as cofactor.

The catalysed reaction is orotidine 5'-phosphate + diphosphate = orotate + 5-phospho-alpha-D-ribose 1-diphosphate. Its pathway is pyrimidine metabolism; UMP biosynthesis via de novo pathway; UMP from orotate: step 1/2. Its function is as follows. Catalyzes the transfer of a ribosyl phosphate group from 5-phosphoribose 1-diphosphate to orotate, leading to the formation of orotidine monophosphate (OMP). This is Orotate phosphoribosyltransferase from Salmonella typhi.